The following is a 261-amino-acid chain: Calbindin (261 aa).

Ala-2 bears the N-acetylalanine mark. The tract at residues 2–7 (AESHLQ) is interaction with RANBP9. EF-hand domains are found at residues 11 to 46 (ITAS…LLQA), 53 to 88 (ELSP…EENF), 98 to 133 (KSCE…LLEK), 142 to 177 (KLAE…QENF), and 186 to 221 (MCGK…LCEK). The Ca(2+) site is built by Asp-24, Asp-26, Ser-28, Tyr-30, and Glu-35. 14 residues coordinate Ca(2+): Asp-111, Asp-113, Ser-115, Glu-122, Asp-155, Asn-157, Asp-159, Lys-161, Glu-166, Asp-199, Asp-201, Asn-203, Tyr-205, and Glu-210.

It belongs to the calbindin family. In terms of assembly, interacts with RANBP9. As to expression, expressed in the modiolar nerve root and in bushy neurons in the ventral cochlear nucleus (at protein level).

Functionally, buffers cytosolic calcium. May stimulate a membrane Ca(2+)-ATPase and a 3',5'-cyclic nucleotide phosphodiesterase. This is Calbindin (Calb1) from Mus musculus (Mouse).